A 90-amino-acid chain; its full sequence is Small ribosomal subunit protein bS16 (90 aa).

This sequence belongs to the bacterial ribosomal protein bS16 family.

In Bacillus velezensis (strain DSM 23117 / BGSC 10A6 / LMG 26770 / FZB42) (Bacillus amyloliquefaciens subsp. plantarum), this protein is Small ribosomal subunit protein bS16.